The following is a 349-amino-acid chain: Anthranilate phosphoribosyltransferase (349 aa).

5-phospho-alpha-D-ribose 1-diphosphate is bound by residues G82, 85-86 (GD), 92-95 (NVST), 110-118 (KHGNRAVSG), and S122. G82 contributes to the anthranilate binding site. A Mg(2+)-binding site is contributed by S94. N113 contacts anthranilate. R168 is a binding site for anthranilate. Mg(2+)-binding residues include D227 and E228.

Belongs to the anthranilate phosphoribosyltransferase family. As to quaternary structure, homodimer. It depends on Mg(2+) as a cofactor.

The catalysed reaction is N-(5-phospho-beta-D-ribosyl)anthranilate + diphosphate = 5-phospho-alpha-D-ribose 1-diphosphate + anthranilate. The protein operates within amino-acid biosynthesis; L-tryptophan biosynthesis; L-tryptophan from chorismate: step 2/5. Functionally, catalyzes the transfer of the phosphoribosyl group of 5-phosphorylribose-1-pyrophosphate (PRPP) to anthranilate to yield N-(5'-phosphoribosyl)-anthranilate (PRA). This Pseudomonas fluorescens (strain ATCC BAA-477 / NRRL B-23932 / Pf-5) protein is Anthranilate phosphoribosyltransferase.